The primary structure comprises 191 residues: MPVCVMMAELDEKLLLQFETQELEAPGGIATPQVYSQLLVLYLLHNDMNNARYLWKRIPQAIKTANPEMAAIWAVGQRIWQRDFPGIYSAIAAYQWSESILPVMEALRESTRRRAYGLVAQAYTSISAEDFAAFVGYSVEEAVKGVVSHGWQADPNTRMIMPQKPDPPPVSLVPNEQQLARLTDYVAFLEN.

Positions 6-179 constitute a PCI domain; it reads MMAELDEKLL…VSLVPNEQQL (174 aa).

Belongs to the CSN8 family. As to quaternary structure, component of the CSN complex, probably composed of cops1, cops2, cops3, cops4, cops5, cops6, cops7, cops8 and cops9.

The protein localises to the cytoplasm. It is found in the nucleus. Its function is as follows. Component of the COP9 signalosome complex (CSN), a complex involved in various cellular and developmental processes. The CSN complex is an essential regulator of the ubiquitin (Ubl) conjugation pathway by mediating the deneddylation of the cullin subunits of E3 ligase complexes, leading to modify the Ubl ligase activity. The chain is COP9 signalosome complex subunit 8 (cops8) from Danio rerio (Zebrafish).